The following is a 122-amino-acid chain: Glycine cleavage system H protein (122 aa).

The region spanning 19–101 is the Lipoyl-binding domain; the sequence is VATVGITDYA…QGKAWFFKIK (83 aa). An N6-lipoyllysine modification is found at Lys-60.

It belongs to the GcvH family. The glycine cleavage system is composed of four proteins: P, T, L and H. The cofactor is (R)-lipoate.

The glycine cleavage system catalyzes the degradation of glycine. The H protein shuttles the methylamine group of glycine from the P protein to the T protein. The polypeptide is Glycine cleavage system H protein (Bradyrhizobium diazoefficiens (strain JCM 10833 / BCRC 13528 / IAM 13628 / NBRC 14792 / USDA 110)).